The chain runs to 284 residues: S-formylglutathione hydrolase (284 aa).

The residue at position 2 (alanine 2) is an N-acetylalanine. Residues asparagine 63 and lysine 67 each contribute to the substrate site. Residues serine 152, aspartate 229, and histidine 262 each act as charge relay system in the active site.

It belongs to the esterase D family. Homodimer.

It carries out the reaction S-formylglutathione + H2O = formate + glutathione + H(+). Activity toward p-nitrophenyl acetate inhibited by N-ethylmaleimide, 10-(fluoroethoxyphosphinyl)-N-(biotinamidopentyl)decanamide (FP-biotin), iodoacetamide, CuCl(2) and ZnSO(4), but not by phenylmethylsulfonyl fluoride, EDTA, Mg(2+), Mn(2+), Ca(2+) or paraoxon, an organo-phosphate inhibitor of serine hydrolases. Its function is as follows. Serine hydrolase which catalyzes the hydrolysis of S-formylglutathione to glutathione and formic acid. Also hydrolyzes S-acetylglutathione and a range of carboxyesters in vitro. Involved in the detoxification of formaldehyde. This is S-formylglutathione hydrolase (SFGH) from Arabidopsis thaliana (Mouse-ear cress).